Reading from the N-terminus, the 489-residue chain is Rhamnulokinase (489 aa).

13–17 lines the ATP pocket; it reads ASSGR. Cysteine 68 and cysteine 222 form a disulfide bridge. Substrate-binding positions include glycine 83 and 236–238; that span reads HDT. Aspartate 237 (proton acceptor) is an active-site residue. ATP is bound at residue threonine 259. Asparagine 296 serves as a coordination point for substrate. Glutamine 304 contributes to the ATP binding site. An intrachain disulfide couples cysteine 353 to cysteine 370. Glycine 402 is an ATP binding site. The cysteines at positions 413 and 417 are disulfide-linked.

Belongs to the rhamnulokinase family. As to quaternary structure, monomer. Requires Mg(2+) as cofactor.

The catalysed reaction is L-rhamnulose + ATP = L-rhamnulose 1-phosphate + ADP + H(+). It functions in the pathway carbohydrate degradation; L-rhamnose degradation; glycerone phosphate from L-rhamnose: step 2/3. Functionally, involved in the catabolism of L-rhamnose (6-deoxy-L-mannose). Catalyzes the transfer of the gamma-phosphate group from ATP to the 1-hydroxyl group of L-rhamnulose to yield L-rhamnulose 1-phosphate. The chain is Rhamnulokinase from Escherichia coli O139:H28 (strain E24377A / ETEC).